A 407-amino-acid chain; its full sequence is S-adenosylmethionine synthase (407 aa).

An ATP-binding site is contributed by H15. D17 serves as a coordination point for Mg(2+). Residue E43 coordinates K(+). L-methionine is bound by residues E56 and Q100. The flexible loop stretch occupies residues 100-110 (QSPDIAQGVDE). Residues 171–173 (DGK), 248–249 (KF), D257, 263–264 (RK), A280, and K284 each bind ATP. Residue D257 participates in L-methionine binding. Position 288 (K288) interacts with L-methionine.

This sequence belongs to the AdoMet synthase family. In terms of assembly, homotetramer; dimer of dimers. Mg(2+) serves as cofactor. The cofactor is K(+).

It is found in the cytoplasm. It carries out the reaction L-methionine + ATP + H2O = S-adenosyl-L-methionine + phosphate + diphosphate. It functions in the pathway amino-acid biosynthesis; S-adenosyl-L-methionine biosynthesis; S-adenosyl-L-methionine from L-methionine: step 1/1. Functionally, catalyzes the formation of S-adenosylmethionine (AdoMet) from methionine and ATP. The overall synthetic reaction is composed of two sequential steps, AdoMet formation and the subsequent tripolyphosphate hydrolysis which occurs prior to release of AdoMet from the enzyme. The chain is S-adenosylmethionine synthase from Synechococcus sp. (strain RCC307).